The chain runs to 101 residues: Small ribosomal subunit protein uS14 (101 aa).

It belongs to the universal ribosomal protein uS14 family. As to quaternary structure, part of the 30S ribosomal subunit. Contacts proteins S3 and S10.

Functionally, binds 16S rRNA, required for the assembly of 30S particles and may also be responsible for determining the conformation of the 16S rRNA at the A site. The protein is Small ribosomal subunit protein uS14 of Rhizobium etli (strain CIAT 652).